We begin with the raw amino-acid sequence, 198 residues long: Thymidine kinase (198 aa).

ATP contacts are provided by residues 9–16 (STMNAGKS) and 87–90 (DEAQ). Glu88 serves as the catalytic Proton acceptor. Cys145, Cys147, Cys182, and His185 together coordinate Zn(2+).

It belongs to the thymidine kinase family. As to quaternary structure, homotetramer.

It is found in the cytoplasm. It carries out the reaction thymidine + ATP = dTMP + ADP + H(+). The chain is Thymidine kinase from Ruegeria pomeroyi (strain ATCC 700808 / DSM 15171 / DSS-3) (Silicibacter pomeroyi).